The sequence spans 57 residues: Small ribosomal subunit protein bS21 (57 aa).

Residues 22 to 57 (QCSKSGVLSEAKKRKHYEKPSEKRKRKATEKRNSRK) are disordered. Over residues 33-57 (KKRKHYEKPSEKRKRKATEKRNSRK) the composition is skewed to basic residues.

This sequence belongs to the bacterial ribosomal protein bS21 family.

The chain is Small ribosomal subunit protein bS21 from Natranaerobius thermophilus (strain ATCC BAA-1301 / DSM 18059 / JW/NM-WN-LF).